A 182-amino-acid polypeptide reads, in one-letter code: Ribosome maturation factor RimM (182 aa).

Residues 103 to 182 (EDDYYWKDLM…RVEVDWDPGF (80 aa)) enclose the PRC barrel domain.

This sequence belongs to the RimM family. As to quaternary structure, binds ribosomal protein uS19.

The protein resides in the cytoplasm. In terms of biological role, an accessory protein needed during the final step in the assembly of 30S ribosomal subunit, possibly for assembly of the head region. Essential for efficient processing of 16S rRNA. May be needed both before and after RbfA during the maturation of 16S rRNA. It has affinity for free ribosomal 30S subunits but not for 70S ribosomes. This is Ribosome maturation factor RimM from Yersinia enterocolitica serotype O:8 / biotype 1B (strain NCTC 13174 / 8081).